Consider the following 345-residue polypeptide: MAKKIVALVGDGIGPEIMEAGLEVLEALAEKTGFDYEIDRRPFGGADIDAAGPPLPDETLKASREADAILLVAIGSPQYDGVAVRPEQGLMALRKELNLYANIRPVKIFDSLKYLSPLKPERISGVDFVVVRELTGEIYFGDHILEERKARDINDYSYEEVERIIRKAFEIARNRRKIVTSIDKQNVLATSKLWRKVAEEVAQDFPDVTLEHQLVDSAAMLMITNPAKFDVIVTENLFGDILSDESSVLSGTLGVMPSASHSENGPSLYEPIHGSAPDIAGQGIANPISMILSVVMMLRDSFGRYEDTERIKRAVETSLAAGILTRDIGGQASTKEMMEAIIARL.

Substrate contacts are provided by arginine 94, arginine 104, arginine 132, and aspartate 216. Mg(2+) is bound by residues aspartate 216, aspartate 240, and aspartate 244. An NAD(+)-binding site is contributed by 274–286 (GSAPDIAGQGIAN).

This sequence belongs to the isocitrate and isopropylmalate dehydrogenases family. LeuB type 1 subfamily. In terms of assembly, homodimer. The cofactor is Mg(2+). Mn(2+) is required as a cofactor.

It is found in the cytoplasm. It catalyses the reaction (2R,3S)-3-isopropylmalate + NAD(+) = 4-methyl-2-oxopentanoate + CO2 + NADH. It participates in amino-acid biosynthesis; L-leucine biosynthesis; L-leucine from 3-methyl-2-oxobutanoate: step 3/4. In terms of biological role, catalyzes the oxidation of 3-carboxy-2-hydroxy-4-methylpentanoate (3-isopropylmalate) to 3-carboxy-4-methyl-2-oxopentanoate. The product decarboxylates to 4-methyl-2 oxopentanoate. In Streptococcus pneumoniae (strain ATCC BAA-255 / R6), this protein is 3-isopropylmalate dehydrogenase.